The primary structure comprises 214 residues: tRNA (guanine-N(7)-)-methyltransferase (214 aa).

Residues Glu44, Glu69, Asp96, and Asp118 each contribute to the S-adenosyl-L-methionine site. Asp118 is an active-site residue. Residues Lys122, Asp154, and 191 to 194 each bind substrate; that span reads TEYE.

It belongs to the class I-like SAM-binding methyltransferase superfamily. TrmB family.

It catalyses the reaction guanosine(46) in tRNA + S-adenosyl-L-methionine = N(7)-methylguanosine(46) in tRNA + S-adenosyl-L-homocysteine. The protein operates within tRNA modification; N(7)-methylguanine-tRNA biosynthesis. Its function is as follows. Catalyzes the formation of N(7)-methylguanine at position 46 (m7G46) in tRNA. The chain is tRNA (guanine-N(7)-)-methyltransferase from Listeria welshimeri serovar 6b (strain ATCC 35897 / DSM 20650 / CCUG 15529 / CIP 8149 / NCTC 11857 / SLCC 5334 / V8).